The following is a 177-amino-acid chain: Large ribosomal subunit protein uL22 (177 aa).

Residues 118-177 (VESRPSREGRRGGAGESAGGARARRAQGSKAAAAKKAPASSSKKAATTTEASEEAKGGSQ) are disordered. Residues 121–130 (RPSREGRRGG) are compositionally biased toward basic and acidic residues. Over residues 145 to 167 (GSKAAAAKKAPASSSKKAATTTE) the composition is skewed to low complexity.

It belongs to the universal ribosomal protein uL22 family. Part of the 50S ribosomal subunit.

Functionally, this protein binds specifically to 23S rRNA; its binding is stimulated by other ribosomal proteins, e.g. L4, L17, and L20. It is important during the early stages of 50S assembly. It makes multiple contacts with different domains of the 23S rRNA in the assembled 50S subunit and ribosome. Its function is as follows. The globular domain of the protein is located near the polypeptide exit tunnel on the outside of the subunit, while an extended beta-hairpin is found that lines the wall of the exit tunnel in the center of the 70S ribosome. In Mycobacterium sp. (strain KMS), this protein is Large ribosomal subunit protein uL22.